A 214-amino-acid chain; its full sequence is Thymidylate kinase (214 aa).

G10–T17 provides a ligand contact to ATP.

Belongs to the thymidylate kinase family.

The enzyme catalyses dTMP + ATP = dTDP + ADP. In terms of biological role, phosphorylation of dTMP to form dTDP in both de novo and salvage pathways of dTTP synthesis. The sequence is that of Thymidylate kinase from Levilactobacillus brevis (strain ATCC 367 / BCRC 12310 / CIP 105137 / JCM 1170 / LMG 11437 / NCIMB 947 / NCTC 947) (Lactobacillus brevis).